The primary structure comprises 249 residues: Small ribosomal subunit protein uS2 (249 aa).

This sequence belongs to the universal ribosomal protein uS2 family.

The chain is Small ribosomal subunit protein uS2 from Listeria innocua serovar 6a (strain ATCC BAA-680 / CLIP 11262).